Reading from the N-terminus, the 168-residue chain is Phosphopantetheine adenylyltransferase (168 aa).

T14 is a substrate binding site. ATP-binding positions include 14–15 (TF) and H22. 3 residues coordinate substrate: K46, L78, and R92. ATP is bound by residues 93-95 (GLR), E103, and 128-134 (YSFISSS).

This sequence belongs to the bacterial CoaD family. In terms of assembly, homohexamer. The cofactor is Mg(2+).

It localises to the cytoplasm. It catalyses the reaction (R)-4'-phosphopantetheine + ATP + H(+) = 3'-dephospho-CoA + diphosphate. Its pathway is cofactor biosynthesis; coenzyme A biosynthesis; CoA from (R)-pantothenate: step 4/5. Functionally, reversibly transfers an adenylyl group from ATP to 4'-phosphopantetheine, yielding dephospho-CoA (dPCoA) and pyrophosphate. This Xanthomonas campestris pv. campestris (strain B100) protein is Phosphopantetheine adenylyltransferase.